Consider the following 184-residue polypeptide: ATP synthase subunit b, chloroplastic (184 aa).

A helical membrane pass occupies residues 27 to 49 (LATNPINLSVVLGVLIFFGKGVL).

This sequence belongs to the ATPase B chain family. F-type ATPases have 2 components, F(1) - the catalytic core - and F(0) - the membrane proton channel. F(1) has five subunits: alpha(3), beta(3), gamma(1), delta(1), epsilon(1). F(0) has four main subunits: a(1), b(1), b'(1) and c(10-14). The alpha and beta chains form an alternating ring which encloses part of the gamma chain. F(1) is attached to F(0) by a central stalk formed by the gamma and epsilon chains, while a peripheral stalk is formed by the delta, b and b' chains.

The protein localises to the plastid. It is found in the chloroplast thylakoid membrane. Functionally, f(1)F(0) ATP synthase produces ATP from ADP in the presence of a proton or sodium gradient. F-type ATPases consist of two structural domains, F(1) containing the extramembraneous catalytic core and F(0) containing the membrane proton channel, linked together by a central stalk and a peripheral stalk. During catalysis, ATP synthesis in the catalytic domain of F(1) is coupled via a rotary mechanism of the central stalk subunits to proton translocation. Its function is as follows. Component of the F(0) channel, it forms part of the peripheral stalk, linking F(1) to F(0). The protein is ATP synthase subunit b, chloroplastic of Morus indica (Mulberry).